We begin with the raw amino-acid sequence, 624 residues long: Alpha-galactosidase 3 (624 aa).

The first 22 residues, 1-22 (MSPSAAVLIPLAAAVLLRPVVG), serve as a signal peptide directing secretion. N-linked (GlcNAc...) asparagine glycans are attached at residues Asn37, Asn56, Asn197, Asn259, and Asn293. Asp347 acts as the Nucleophile in catalysis. An N-linked (GlcNAc...) asparagine glycan is attached at Asn393. Asp412 functions as the Proton donor in the catalytic mechanism. Residue Asn469 is glycosylated (N-linked (GlcNAc...) asparagine).

Belongs to the glycosyl hydrolase 27 family.

It is found in the secreted. The catalysed reaction is Hydrolysis of terminal, non-reducing alpha-D-galactose residues in alpha-D-galactosides, including galactose oligosaccharides, galactomannans and galactolipids.. Functionally, alpha-galactosidase involved in the degradation of simple oligosaccharides like melibiose, raffinose and stachyose, and of polymeric galacto(gluco)mannans. The sequence is that of Alpha-galactosidase 3 (agl3) from Hypocrea jecorina (Trichoderma reesei).